The sequence spans 367 residues: MAFKLWLLDEETIYEHVFERYTQLEGQSGKLAQDLGIQDRRGGVLEITFEPSGLEGGRKKKRVRRRNKASSVEEDQNVAVDSYHVSVGQSISSLHSSRDNGNSTTGYVLWSTTPFFINWLLYSTSAAPFRLGSQVEVTCGSSCEGHKLELPRLVDLTGADRGKRGILELGAGISGILPVILGNFVDTYVSTDQKGILNKLKDNIMENLSQLTRKRCISRSLRLELPTVEPVGDADITAASLPSKSTLHLEVAALDWEKINLQDKKTHSLHPELSLIGETCSSVYVIAMDVIYNEYLIDPFLKTLKQLKHWLQTTYNLQFHVLVGIHLRSQEVTTLFLEKAIIEYDFTVYDIVDQVIQESRFNFYLIT.

The interval 55–74 (EGGRKKKRVRRRNKASSVEE) is disordered. Positions 58–68 (RKKKRVRRRNK) are enriched in basic residues. Residues W110, 170–172 (GAG), D192, W256, and M288 each bind S-adenosyl-L-methionine.

Belongs to the class I-like SAM-binding methyltransferase superfamily. RKM5 family.

In terms of biological role, S-adenosyl-L-methionine-dependent protein-lysine N-methyltransferase that monomethylates 60S ribosomal protein L1 (RPL1A and RPL1B) at 'Lys-46'. This Saccharomyces cerevisiae (strain RM11-1a) (Baker's yeast) protein is Ribosomal lysine N-methyltransferase 5 (RKM5).